The sequence spans 418 residues: L-rhamnose isomerase (418 aa).

Residues H262, D294, and D296 each coordinate Mn(2+).

Belongs to the rhamnose isomerase family. As to quaternary structure, homotetramer. Mn(2+) serves as cofactor.

It localises to the cytoplasm. It catalyses the reaction L-rhamnopyranose = L-rhamnulose. Its pathway is carbohydrate degradation; L-rhamnose degradation; glycerone phosphate from L-rhamnose: step 1/3. Its function is as follows. Catalyzes the interconversion of L-rhamnose and L-rhamnulose. This Yersinia pestis bv. Antiqua (strain Antiqua) protein is L-rhamnose isomerase.